We begin with the raw amino-acid sequence, 449 residues long: Probable hexaprenyl pyrophosphate synthase, mitochondrial (449 aa).

The isopentenyl diphosphate site is built by Lys122, Arg125, and His200. 2 residues coordinate Mg(2+): Asp207 and Asp211. Arg216 provides a ligand contact to an all-trans-polyprenyl diphosphate. Arg217 is a binding site for isopentenyl diphosphate. The an all-trans-polyprenyl diphosphate site is built by Lys300, Thr301, Gln338, and Lys355.

It belongs to the FPP/GGPP synthase family. It depends on Mg(2+) as a cofactor.

It localises to the mitochondrion. It functions in the pathway cofactor biosynthesis; ubiquinone biosynthesis. Assembly of polyisoprenoid side chains. The polyprenyl synthase of coenzyme Q biosynthesis catalyzes the formation from isopentenyl diphosphate of all trans-polyprenyl pyrophosphates generally ranging in length of between 6 and 10 isoprene units depending on the species. The protein is Probable hexaprenyl pyrophosphate synthase, mitochondrial of Neurospora crassa (strain ATCC 24698 / 74-OR23-1A / CBS 708.71 / DSM 1257 / FGSC 987).